The sequence spans 856 residues: Beta-galactosidase 3 (856 aa).

The N-terminal stretch at 1–31 (MREMGTGDSASRLILWFCLGFLILGVGFVQC) is a signal peptide. Glu189 acts as the Proton donor in catalysis. Glu258 acts as the Nucleophile in catalysis. N-linked (GlcNAc...) asparagine glycosylation is present at Asn468. In terms of domain architecture, SUEL-type lectin spans 760 to 846 (TFHRPKVHLK…KRLTVEAVCA (87 aa)).

The protein belongs to the glycosyl hydrolase 35 family. Ubiquitous.

It is found in the secreted. The protein localises to the extracellular space. It localises to the apoplast. It carries out the reaction Hydrolysis of terminal non-reducing beta-D-galactose residues in beta-D-galactosides.. The sequence is that of Beta-galactosidase 3 (BGAL3) from Arabidopsis thaliana (Mouse-ear cress).